The sequence spans 123 residues: Small ribosomal subunit protein uS12 (123 aa).

A disordered region spans residues 1–32 (MPTIQQLVRKGRKTKVSKNKTPALKGSPQRRG). A compositionally biased stretch (basic residues) spans 9-18 (RKGRKTKVSK). The residue at position 89 (D89) is a 3-methylthioaspartic acid.

Belongs to the universal ribosomal protein uS12 family. As to quaternary structure, part of the 30S ribosomal subunit. Contacts proteins S8 and S17. May interact with IF1 in the 30S initiation complex.

Functionally, with S4 and S5 plays an important role in translational accuracy. Interacts with and stabilizes bases of the 16S rRNA that are involved in tRNA selection in the A site and with the mRNA backbone. Located at the interface of the 30S and 50S subunits, it traverses the body of the 30S subunit contacting proteins on the other side and probably holding the rRNA structure together. The combined cluster of proteins S8, S12 and S17 appears to hold together the shoulder and platform of the 30S subunit. This is Small ribosomal subunit protein uS12 from Thermobifida fusca (strain YX).